A 392-amino-acid chain; its full sequence is Telomere-binding protein subunit beta (392 aa).

The segment at glutamine 234–lysine 392 is disordered. The span at glycine 247–alanine 256 shows a compositional bias: basic residues. Positions threonine 257–lysine 268 are enriched in low complexity. A compositionally biased stretch (basic and acidic residues) spans lysine 269 to valine 284. Residues serine 328–methionine 343 are compositionally biased toward polar residues. Residues glycine 374–serine 384 show a composition bias toward low complexity.

In terms of assembly, heterodimer of an alpha and a beta subunit.

It is found in the nucleus. The protein localises to the chromosome. Its subcellular location is the telomere. Functionally, may function as protective capping of the single-stranded telomeric overhang. May also participate in telomere length regulation during DNA replication. This is Telomere-binding protein subunit beta (STY43) from Stylonychia mytilus (Ciliate).